The chain runs to 421 residues: Cyclin-A2 (421 aa).

M1 carries the N-acetylmethionine modification. The interval 1 to 60 (MPGSSRQSGREAGSALLSLQQEDQENVNPEKAAPDQRARAALKTGNARGNAPQQRLKARR) is disordered. S5 is subject to Phosphoserine.

It belongs to the cyclin family. Cyclin AB subfamily. Interacts with the CDK1 and CDK2 protein kinases to form serine/threonine kinase holoenzyme complexes. Interacts with CDK1 (hyperphosphorylated form in G1 and underphosphorylated forms in S and G2). Interacts with CDK2; the interaction increases from G1 to G2. Interacts (associated with CDK2 but not with CDK1) with SCAPER; regulates the activity of CCNA2/CDK2 by transiently maintaining CCNA2 in the cytoplasm. Forms a ternary complex with CDK2 and CDKN1B; CDKN1B inhibits the kinase activity of CDK2 through conformational rearrangements. Interacts with INCA1. Post-translationally, polyubiquitinated via 'Lys-11'-linked ubiquitin by the anaphase-promoting complex (APC/C), leading to its degradation by the proteasome. Deubiquitinated and stabilized by USP37 enables entry into S phase. Ubiquitinated during the G1 phase by the SCF(FBXO31) complex, leading to its proteasomal degradation.

It localises to the nucleus. It is found in the cytoplasm. Cyclin which controls both the G1/S and the G2/M transition phases of the cell cycle. Functions through the formation of specific serine/threonine kinase holoenzyme complexes with the cyclin-dependent protein kinases CDK1 and CDK2. The cyclin subunit confers the substrate specificity of these complexes and differentially interacts with and activates CDK1 and CDK2 throughout the cell cycle. In Mesocricetus auratus (Golden hamster), this protein is Cyclin-A2.